An 82-amino-acid chain; its full sequence is Mu-conotoxin MrVIB (82 aa).

An N-terminal signal peptide occupies residues 1 to 22 (MKLTCMMIVAVLFLTAWTLVMA). Positions 23–49 (DDSNNGLANHFLKSRDEMEDPEASKLE) are excised as a propeptide. Intrachain disulfides connect Cys-53-Cys-71, Cys-60-Cys-76, and Cys-70-Cys-81.

The protein belongs to the conotoxin O1 superfamily. Expressed by the venom duct.

The protein resides in the secreted. Its function is as follows. MuO-conotoxins are gating-modifier toxins that inhibit sodium current by trapping the domain II voltage sensor in the closed position to prevent opening of the sodium channel. This toxin has a preference for Nav1.4/SCN4A over Nav1.2/SCN2A sodium channels. It blocks Nav channels by interacting mainly with the C-terminal part of the pore loop of domain-3. It also blocks fast-inactivating calcium current. Blocks Nav1.8/SCN10A sodium channels and has potent and long-lasting local anesthetic effects. It can also block propagation of action potentials in A- and C-fibers in sciatic nerve as well as skeletal muscle in isolated preparations. The polypeptide is Mu-conotoxin MrVIB (Conus marmoreus (Marble cone)).